Consider the following 212-residue polypeptide: uncharacterized protein (212 aa).

2 disordered regions span residues 1 to 25 (MARK…GRPN) and 165 to 212 (STSG…HWGG). Over residues 202–212 (RSSSARGHWGG) the composition is skewed to low complexity.

This is an uncharacterized protein from Escherichia coli (strain K12).